Reading from the N-terminus, the 88-residue chain is Small ribosomal subunit protein bS20 (88 aa).

The interval 1–26 is disordered; that stretch reads MANTAQARKRARQNTKRRQNSASQRS. The segment covering 7-19 has biased composition (basic residues); the sequence is ARKRARQNTKRRQ.

This sequence belongs to the bacterial ribosomal protein bS20 family.

In terms of biological role, binds directly to 16S ribosomal RNA. The sequence is that of Small ribosomal subunit protein bS20 from Psychrobacter arcticus (strain DSM 17307 / VKM B-2377 / 273-4).